Consider the following 341-residue polypeptide: UDP-glucose 4-epimerase (341 aa).

The protein belongs to the polysaccharide synthase family.

The catalysed reaction is UDP-alpha-D-glucose = UDP-alpha-D-galactose. Its function is as follows. Epimerizes UDP-galactose to UDP-glucose. This chain is UDP-glucose 4-epimerase (capD), found in Rickettsia typhi (strain ATCC VR-144 / Wilmington).